Here is a 130-residue protein sequence, read N- to C-terminus: Probable pilin MJ0835.1 (130 aa).

A propeptide spanning residues 1-14 is cleaved from the precursor; that stretch reads MNTMENKIIKSKKA. Positions 15 to 23 match the QXSXEXXXL motif; sequence QVSLEFSFL.

Post-translationally, the N-terminus is cleaved by the prepilin peptidase EppA, which recognizes the class III signal sequence.

Its subcellular location is the secreted. It localises to the cell surface. The protein localises to the fimbrium. The protein is Probable pilin MJ0835.1 of Methanocaldococcus jannaschii (strain ATCC 43067 / DSM 2661 / JAL-1 / JCM 10045 / NBRC 100440) (Methanococcus jannaschii).